Consider the following 565-residue polypeptide: Anaphase-promoting complex subunit 7 (565 aa).

10 TPR repeats span residues 101–134 (EIEV…RQRT), 169–202 (LDAI…LDWL), 203–236 (SVWI…LRDN), 237–270 (VDLL…DPYL), 339–372 (VQAL…APCR), 373–406 (LDCY…LGAN), 407–441 (AQTL…RPDY), 442–474 (IKAV…NQSD), 475–508 (CVLH…DPND), and 509–531 (QKSL…TQEE). Lysine 229 carries the post-translational modification N6-acetyllysine. The segment covering 513 to 523 (EGMQKMEKEES) has biased composition (basic and acidic residues). A disordered region spans residues 513 to 565 (EGMQKMEKEESPTDATQEEDVDDMEGSGEEGDLEGSDSEAAQWADQEQWFGMQ). Acidic residues predominate over residues 528–549 (TQEEDVDDMEGSGEEGDLEGSD).

The protein belongs to the APC7 family. V-shaped homodimer. The mammalian APC/C is composed at least of 14 distinct subunits ANAPC1, ANAPC2, CDC27/APC3, ANAPC4, ANAPC5, CDC16/APC6, ANAPC7, CDC23/APC8, ANAPC10, ANAPC11, CDC26/APC12, ANAPC13, ANAPC15 and ANAPC16 that assemble into a complex of at least 19 chains with a combined molecular mass of around 1.2 MDa; APC/C interacts with FZR1 and FBXO5.

Its subcellular location is the cytoplasm. It is found in the cytoskeleton. It localises to the nucleus. The protein localises to the spindle. Its pathway is protein modification; protein ubiquitination. In terms of biological role, component of the anaphase promoting complex/cyclosome (APC/C), a cell cycle-regulated E3 ubiquitin ligase that controls progression through mitosis and the G1 phase of the cell cycle. The APC/C complex acts by mediating ubiquitination and subsequent degradation of target proteins: it mainly mediates the formation of 'Lys-11'-linked polyubiquitin chains and, to a lower extent, the formation of 'Lys-48'- and 'Lys-63'-linked polyubiquitin chains. The APC/C complex catalyzes assembly of branched 'Lys-11'-/'Lys-48'-linked branched ubiquitin chains on target proteins. APC7 is not required for the assembly of the APC/C complex, but has an enzyme-substrate adapter activity mediating the processive ubiquitination of specific substrates. Involved in brain development through the specific ubiquitination and clearance of MKI67 from constitutive heterochromatin after neuronal progenitors exit mitosis. In Homo sapiens (Human), this protein is Anaphase-promoting complex subunit 7.